The chain runs to 462 residues: NAD(P) transhydrogenase subunit beta (462 aa).

Residues 1–3 (MSG) lie on the Periplasmic side of the membrane. A helical membrane pass occupies residues 4 to 24 (GLVTAAYIVAAILFIFSLAGL). The Cytoplasmic portion of the chain corresponds to 25–45 (SKHETSRQGNNFGIAGMAIAL). A helical membrane pass occupies residues 46–66 (IATIFGPDTGNVGWILLAMVI). At 67-82 (GGAIGIRLAKKVEMTE) the chain is on the periplasmic side. The chain crosses the membrane as a helical span at residues 83 to 103 (MPELVAILHSFVGLAAVLVGF). Residues 104–115 (NSYLHHDAGMAP) are Cytoplasmic-facing. The helical transmembrane segment at 116 to 136 (ILVNIHLTEVFLGIFIGAVTF) threads the bilayer. Topologically, residues 137–164 (TGSVVAFGKLCGKISSKPLMLPNRHKMN) are periplasmic. Residues 165–185 (LAALVVSFLLLIVFVRTDSVG) form a helical membrane-spanning segment. At 186–188 (LQV) the chain is on the cytoplasmic side. A helical membrane pass occupies residues 189–209 (LALLIMTAIALVFGWHLVASI). The Periplasmic portion of the chain corresponds to 210 to 215 (GGADMP). Residues 216–236 (VVVSMLNSYSGWAAAAAGFML) traverse the membrane as a helical segment. Topologically, residues 237–239 (SND) are cytoplasmic. A helical membrane pass occupies residues 240–260 (LLIVTGALVGSSGAILSYIMC). The Periplasmic portion of the chain corresponds to 261 to 308 (KAMNRSFISVIAGGFGTDGSSTGDDQEVGEHREITAEETAELLKNSHS). Residues 309–329 (VIITPGYGMAVAQAQYPVAEI) traverse the membrane as a helical segment. Topologically, residues 330–462 (TEKLRARGIN…ASVDAILKAL (133 aa)) are cytoplasmic.

Belongs to the PNT beta subunit family. In terms of assembly, heterodimer of an alpha and a beta chain.

It is found in the cell inner membrane. It carries out the reaction NAD(+) + NADPH + H(+)(in) = NADH + NADP(+) + H(+)(out). Functionally, the transhydrogenation between NADH and NADP is coupled to respiration and ATP hydrolysis and functions as a proton pump across the membrane. This Escherichia coli O157:H7 protein is NAD(P) transhydrogenase subunit beta (pntB).